A 178-amino-acid chain; its full sequence is Probable inosine/xanthosine triphosphatase (178 aa).

It belongs to the YjjX NTPase family. Homodimer. It depends on Mg(2+) as a cofactor. Mn(2+) serves as cofactor.

The catalysed reaction is XTP + H2O = XDP + phosphate + H(+). It catalyses the reaction ITP + H2O = IDP + phosphate + H(+). Its function is as follows. Phosphatase that hydrolyzes non-canonical purine nucleotides such as XTP and ITP to their respective diphosphate derivatives. Probably excludes non-canonical purines from DNA/RNA precursor pool, thus preventing their incorporation into DNA/RNA and avoiding chromosomal lesions. The sequence is that of Probable inosine/xanthosine triphosphatase from Pyrobaculum aerophilum (strain ATCC 51768 / DSM 7523 / JCM 9630 / CIP 104966 / NBRC 100827 / IM2).